The chain runs to 100 residues: Aspartyl/glutamyl-tRNA(Asn/Gln) amidotransferase subunit C (100 aa).

It belongs to the GatC family. As to quaternary structure, heterotrimer of A, B and C subunits.

The enzyme catalyses L-glutamyl-tRNA(Gln) + L-glutamine + ATP + H2O = L-glutaminyl-tRNA(Gln) + L-glutamate + ADP + phosphate + H(+). It carries out the reaction L-aspartyl-tRNA(Asn) + L-glutamine + ATP + H2O = L-asparaginyl-tRNA(Asn) + L-glutamate + ADP + phosphate + 2 H(+). Functionally, allows the formation of correctly charged Asn-tRNA(Asn) or Gln-tRNA(Gln) through the transamidation of misacylated Asp-tRNA(Asn) or Glu-tRNA(Gln) in organisms which lack either or both of asparaginyl-tRNA or glutaminyl-tRNA synthetases. The reaction takes place in the presence of glutamine and ATP through an activated phospho-Asp-tRNA(Asn) or phospho-Glu-tRNA(Gln). The sequence is that of Aspartyl/glutamyl-tRNA(Asn/Gln) amidotransferase subunit C from Staphylococcus carnosus (strain TM300).